Here is a 53-residue protein sequence, read N- to C-terminus: Dihydrolipoyl dehydrogenase (53 aa).

Residues 35–44 and Lys-53 each bind FAD; that span reads EKYPTFGGTC. A disulfide bridge connects residues Cys-44 and Cys-49.

This sequence belongs to the class-I pyridine nucleotide-disulfide oxidoreductase family. In terms of assembly, homodimer. Requires FAD as cofactor.

It is found in the mitochondrion. The catalysed reaction is N(6)-[(R)-dihydrolipoyl]-L-lysyl-[protein] + NAD(+) = N(6)-[(R)-lipoyl]-L-lysyl-[protein] + NADH + H(+). Its activity is regulated as follows. Lipoamide reduction and the NADH -&gt; NAD reaction are both completely inhibited by copper and cadmium ions. Lipoamide dehydrogenase is a component of the glycine cleavage system as well as of the alpha-ketoacid dehydrogenase complexes. This enzyme has lipoamide dehydrogenase activity and NADH -&gt; NAD transhydrogenation activity. Also displays some NADH-ferricyanide reductase and NADPH -&gt; NAD transydrogenation activities. The chain is Dihydrolipoyl dehydrogenase from Hymenolepis diminuta (Rat tapeworm).